The chain runs to 315 residues: MSQISSLRHITVLLDEAVAALNVRADGRYLDGTFGRGGHSRLLLQQLGPNGQLLGFDKDPLAIATGQALAAEDGRFVVVQRSFAELGDEVAQRGWTGAVSGILLDLGVSSPQLDDPIRGFSFLNDGPLDMRMDPSRGVSAAEWIASADEDEIARVFKDYGEERFAKRMARAVVQRRAEAPFERTADLAKVLTDANPAWEKGKSPATRAFQGLRIHINNELGDLERGLDAALDALEVGGRLVVISFHSLEDRIVKQFMRRHAKGEADKLPRDLPIIPKAFEPRLKLIGKPQYASEAEVKANPRSRSAVMRVAEKVR.

Residues 37 to 39, Asp-57, Phe-83, Asp-105, and Gln-112 contribute to the S-adenosyl-L-methionine site; that span reads GGH. Positions 296-315 are disordered; sequence EVKANPRSRSAVMRVAEKVR.

Belongs to the methyltransferase superfamily. RsmH family.

It localises to the cytoplasm. The enzyme catalyses cytidine(1402) in 16S rRNA + S-adenosyl-L-methionine = N(4)-methylcytidine(1402) in 16S rRNA + S-adenosyl-L-homocysteine + H(+). Its function is as follows. Specifically methylates the N4 position of cytidine in position 1402 (C1402) of 16S rRNA. In Stutzerimonas stutzeri (strain A1501) (Pseudomonas stutzeri), this protein is Ribosomal RNA small subunit methyltransferase H.